Here is a 188-residue protein sequence, read N- to C-terminus: Fructose-1-phosphate phosphatase YqaB (188 aa).

Asp-11 serves as the catalytic Nucleophile. Mg(2+) is bound by residues Asp-11, Asp-13, and Asp-167. 11-13 (DMD) is a substrate binding site.

This sequence belongs to the HAD-like hydrolase superfamily. CbbY/CbbZ/Gph/YieH family. Mg(2+) is required as a cofactor. The cofactor is Mn(2+). It depends on Co(2+) as a cofactor. Requires Zn(2+) as cofactor.

Functionally, catalyzes strongly the dephosphorylation of fructose-1-phosphate (Fru1P) and slightly the dephosphorylation of 6-phosphogluconate (6P-Glu). It has low beta-phosphoglucomutase activity. The sequence is that of Fructose-1-phosphate phosphatase YqaB (yqaB) from Escherichia coli (strain K12).